The following is a 234-amino-acid chain: FAS1 domain-containing protein AFUA_8G05360 (234 aa).

A signal peptide spans 1–21 (MRRTLFVLFVVAFCFIGSVIA). Positions 83 to 231 (KPVVSDVLPK…GELWILNSVL (149 aa)) constitute an FAS1 domain.

It is found in the vacuole. This chain is FAS1 domain-containing protein AFUA_8G05360, found in Aspergillus fumigatus (strain ATCC MYA-4609 / CBS 101355 / FGSC A1100 / Af293) (Neosartorya fumigata).